Reading from the N-terminus, the 114-residue chain is uncharacterized protein (114 aa).

The protein to E.coli YggL.

This is an uncharacterized protein from Haemophilus influenzae (strain ATCC 51907 / DSM 11121 / KW20 / Rd).